A 607-amino-acid chain; its full sequence is MNLEELKKRQEKIRNFSIIAHIDHGKSTLADRILEKTETVSSREMQAQLLDSMDLERERGITIKLNAIELNYTAKDGETYIFHLIDTPGHVDFTYEVSRSLAACEGAILVVDAAQGIEAQTLANVYLALDNDLEIMPVINKIDLPAADPERVRTEIEDVIGLDASEAVLASAKAGIGIEEILEQIVEKVPAPTGDVTAPLKALIFDSVYDAYRGVILQVRVMDGVVKPGDKIQLMSNGKTFDVTEVGIFTPKAVGRDFLATGDVGYIAASIKTVQDTRVGDTVTLATNPAAEPLHGYKQMNPMVFAGLYPIESNKYNDLREALEKLQLNDASLQFEPETSQALGFGFRCGFLGLLHMDVIQERLEREFNIDLIMTAPSVIYKVNLTDGESMDVSNPSEFPDPTKIATIEEPYVKAQIMVPQEFVGAVMELAQRKRGDFVTMDYIDDNRVNVIYQIPLAEIVFDFFDKLKSSTRGYASFDYELSEYRPSKLVKMDILLNGDKVDALSFIVHKDFAYERGKLIVDKLKKIIPRQQFEVPIQAAIGHKIVARTDIKALRKNVLAKCYGGDVSRKRKLLEKQKAGKKRMKSIGSVEVPQEAFLSVLSMDEE.

Residues 11-193 form the tr-type G domain; it reads EKIRNFSIIA…QIVEKVPAPT (183 aa). Residues 23 to 28 and 140 to 143 contribute to the GTP site; these read DHGKST and NKID.

The protein belongs to the TRAFAC class translation factor GTPase superfamily. Classic translation factor GTPase family. LepA subfamily.

The protein resides in the cell membrane. The enzyme catalyses GTP + H2O = GDP + phosphate + H(+). Its function is as follows. Required for accurate and efficient protein synthesis under certain stress conditions. May act as a fidelity factor of the translation reaction, by catalyzing a one-codon backward translocation of tRNAs on improperly translocated ribosomes. Back-translocation proceeds from a post-translocation (POST) complex to a pre-translocation (PRE) complex, thus giving elongation factor G a second chance to translocate the tRNAs correctly. Binds to ribosomes in a GTP-dependent manner. This Streptococcus pneumoniae (strain Hungary19A-6) protein is Elongation factor 4.